We begin with the raw amino-acid sequence, 180 residues long: Large ribosomal subunit protein uL5 (180 aa).

This sequence belongs to the universal ribosomal protein uL5 family. In terms of assembly, part of the 50S ribosomal subunit; part of the 5S rRNA/L5/L18/L25 subcomplex. Contacts the 5S rRNA and the P site tRNA. Forms a bridge to the 30S subunit in the 70S ribosome.

Its function is as follows. This is one of the proteins that bind and probably mediate the attachment of the 5S RNA into the large ribosomal subunit, where it forms part of the central protuberance. In the 70S ribosome it contacts protein S13 of the 30S subunit (bridge B1b), connecting the 2 subunits; this bridge is implicated in subunit movement. Contacts the P site tRNA; the 5S rRNA and some of its associated proteins might help stabilize positioning of ribosome-bound tRNAs. The protein is Large ribosomal subunit protein uL5 of Stenotrophomonas maltophilia (strain K279a).